Consider the following 512-residue polypeptide: GMP synthase [glutamine-hydrolyzing] (512 aa).

Residues 7-197 (TIIVLDFGSQ…VFGVCGCSEG (191 aa)) enclose the Glutamine amidotransferase type-1 domain. Cysteine 84 serves as the catalytic Nucleophile. Catalysis depends on residues histidine 171 and glutamate 173. The GMPS ATP-PPase domain maps to 198–387 (WNMENFIEVE…LGIPDEIVWR (190 aa)). Residue 225-231 (SGGVDSS) participates in ATP binding.

As to quaternary structure, homodimer.

The catalysed reaction is XMP + L-glutamine + ATP + H2O = GMP + L-glutamate + AMP + diphosphate + 2 H(+). Its pathway is purine metabolism; GMP biosynthesis; GMP from XMP (L-Gln route): step 1/1. Its function is as follows. Catalyzes the synthesis of GMP from XMP. In Bacillus mycoides (strain KBAB4) (Bacillus weihenstephanensis), this protein is GMP synthase [glutamine-hydrolyzing].